The chain runs to 63 residues: Cytochrome c oxidase subunit 7C, mitochondrial (63 aa).

The N-terminal 16 residues, 1 to 16, are a transit peptide targeting the mitochondrion; that stretch reads MLGQSIRRFTTSVVRR. Over 17-34 the chain is Mitochondrial matrix; sequence SHYEEGPGKNLPFSVENK. An N6-acetyllysine; alternate modification is found at lysine 25. The residue at position 25 (lysine 25) is an N6-succinyllysine; alternate. The chain crosses the membrane as a helical span at residues 35-57; the sequence is WRLLAMMTVYFGSGFAAPFFIVR. Topologically, residues 58–63 are mitochondrial intermembrane; sequence HQLLKK.

The protein belongs to the cytochrome c oxidase VIIc family. As to quaternary structure, component of the cytochrome c oxidase (complex IV, CIV), a multisubunit enzyme composed of 14 subunits. The complex is composed of a catalytic core of 3 subunits MT-CO1, MT-CO2 and MT-CO3, encoded in the mitochondrial DNA, and 11 supernumerary subunits COX4I, COX5A, COX5B, COX6A, COX6B, COX6C, COX7A, COX7B, COX7C, COX8 and NDUFA4, which are encoded in the nuclear genome. The complex exists as a monomer or a dimer and forms supercomplexes (SCs) in the inner mitochondrial membrane with NADH-ubiquinone oxidoreductase (complex I, CI) and ubiquinol-cytochrome c oxidoreductase (cytochrome b-c1 complex, complex III, CIII), resulting in different assemblies (supercomplex SCI(1)III(2)IV(1) and megacomplex MCI(2)III(2)IV(2)). Interacts with RAB5IF.

It localises to the mitochondrion inner membrane. It participates in energy metabolism; oxidative phosphorylation. Its function is as follows. Component of the cytochrome c oxidase, the last enzyme in the mitochondrial electron transport chain which drives oxidative phosphorylation. The respiratory chain contains 3 multisubunit complexes succinate dehydrogenase (complex II, CII), ubiquinol-cytochrome c oxidoreductase (cytochrome b-c1 complex, complex III, CIII) and cytochrome c oxidase (complex IV, CIV), that cooperate to transfer electrons derived from NADH and succinate to molecular oxygen, creating an electrochemical gradient over the inner membrane that drives transmembrane transport and the ATP synthase. Cytochrome c oxidase is the component of the respiratory chain that catalyzes the reduction of oxygen to water. Electrons originating from reduced cytochrome c in the intermembrane space (IMS) are transferred via the dinuclear copper A center (CU(A)) of subunit 2 and heme A of subunit 1 to the active site in subunit 1, a binuclear center (BNC) formed by heme A3 and copper B (CU(B)). The BNC reduces molecular oxygen to 2 water molecules using 4 electrons from cytochrome c in the IMS and 4 protons from the mitochondrial matrix. This chain is Cytochrome c oxidase subunit 7C, mitochondrial (Cox7c), found in Mus musculus (Mouse).